A 215-amino-acid polypeptide reads, in one-letter code: MQFFIDSADVGEIKKALALGLCDGVTTNPSLVAKTGRSFDDVLKEIVALAPGPISAEVTATDAEGMLREARAYAKYGDQVVIKIPLIVEGLRAVKVLSQEGVKTNVTLCFSAVQALLAAKAGATYVSPFVGRLDDISQDGMQLIADILEIYRNYDFDTKVLVASVRHPVHVLEAARLGAHVATIPFGVIEQLAKHPLTDAGLKKFLADWEKVPKR.

Lys83 (schiff-base intermediate with substrate) is an active-site residue.

This sequence belongs to the transaldolase family. Type 3B subfamily.

It localises to the cytoplasm. It catalyses the reaction D-sedoheptulose 7-phosphate + D-glyceraldehyde 3-phosphate = D-erythrose 4-phosphate + beta-D-fructose 6-phosphate. It participates in carbohydrate degradation; pentose phosphate pathway; D-glyceraldehyde 3-phosphate and beta-D-fructose 6-phosphate from D-ribose 5-phosphate and D-xylulose 5-phosphate (non-oxidative stage): step 2/3. In terms of biological role, transaldolase is important for the balance of metabolites in the pentose-phosphate pathway. The protein is Probable transaldolase of Anaeromyxobacter sp. (strain Fw109-5).